Reading from the N-terminus, the 360-residue chain is Alpha-methylacyl-CoA racemase (360 aa).

Residues Arg-38, 59-62 (ADLK), 83-85 (GYR), Arg-91, and 125-130 (GHDINY) contribute to the substrate site. Catalysis depends on His-126, which acts as the Proton acceptor. Asp-156 serves as the catalytic Proton donor.

This sequence belongs to the CoA-transferase III family. Homodimer.

It catalyses the reaction a (2S)-2-methylacyl-CoA = a (2R)-2-methylacyl-CoA. The enzyme catalyses (2S)-2-methyltetradecanoyl-CoA = (2R)-2-methyltetradecanoyl-CoA. The catalysed reaction is (2R)-pristanoyl-CoA = (2S)-pristanoyl-CoA. It carries out the reaction (25S)-3-oxocholest-4-en-26-oyl-CoA = (25R)-3-oxocholest-4-en-26-oyl-CoA. It catalyses the reaction (2S)-ibuprofenoyl-CoA = (2R)-ibuprofenoyl-CoA. Inactivated by N,N-dialkylcarbamoyl-CoA substrate-product analogs. Its function is as follows. Catalyzes the epimerization of (2R)- and (2S)-methylacyl-coenzyme A (CoA) thioesters. Accepts as substrates a wide range of alpha-methylacyl-CoAs, including (2R)-2-methylmyristoyl-CoA and (2S)-2-methylmyristoyl-CoA, (2R)-pristanoyl-CoA and (2S)-pristanoyl-CoA, and the cholesterol esters (25R)-3-oxo-cholest-4-en-26-oyl-CoA and (25S)-3-oxo-cholest-4-en-26-oyl-CoA. Can also catalyze the interconversion of the non-physiologic substrates (2R)-ibuprofenoyl-CoA and (2S)-ibuprofenoyl-CoA, which are potential competitive inhibitors of the enzyme. This Mycobacterium tuberculosis (strain ATCC 25618 / H37Rv) protein is Alpha-methylacyl-CoA racemase.